The following is a 125-amino-acid chain: MTDRANSRDKGRQAEEMACAHLLRQGLATLGKNWTCRRGELDLVMLDGDTVVFVEVRSRRHRAWGGALESIDARKRQRLILSAELFLQQEARWAKRPCRFDVVTVDTSDGQSPPRLDWIQNAFDA.

This sequence belongs to the UPF0102 family.

The protein is UPF0102 protein PSPA7_4996 of Pseudomonas paraeruginosa (strain DSM 24068 / PA7) (Pseudomonas aeruginosa (strain PA7)).